The chain runs to 85 residues: Hepcidin (85 aa).

Positions 1-24 are cleaved as a signal peptide; sequence MKTFSVAVAVAVVLAFICLQESSA. The propeptide occupies 25 to 64; the sequence is VPVTEVQELEEPMSNEYQEMPVESWKMPYNNRHKRHSSPG. Disulfide bonds link Cys-66–Cys-83, Cys-69–Cys-72, Cys-70–Cys-79, and Cys-73–Cys-82.

As to expression, predominantly expressed in liver.

Its subcellular location is the secreted. In terms of biological role, seems to act as a signaling molecule involved in the maintenance of iron homeostasis. Seems to be required in conjunction with HFE to regulate both intestinal iron absorption and iron storage in macrophages. Functionally, antimicrobial activity against Gram-negative bacteria such as E.coli. This Morone chrysops x Morone saxatilis (White bass x Striped bass) protein is Hepcidin (hamp).